The chain runs to 879 residues: Alanine--tRNA ligase (879 aa).

The Zn(2+) site is built by His566, His570, Cys668, and His672.

This sequence belongs to the class-II aminoacyl-tRNA synthetase family. It depends on Zn(2+) as a cofactor.

It is found in the cytoplasm. It catalyses the reaction tRNA(Ala) + L-alanine + ATP = L-alanyl-tRNA(Ala) + AMP + diphosphate. Catalyzes the attachment of alanine to tRNA(Ala) in a two-step reaction: alanine is first activated by ATP to form Ala-AMP and then transferred to the acceptor end of tRNA(Ala). Also edits incorrectly charged Ser-tRNA(Ala) and Gly-tRNA(Ala) via its editing domain. The protein is Alanine--tRNA ligase of Listeria innocua serovar 6a (strain ATCC BAA-680 / CLIP 11262).